The chain runs to 677 residues: Fidgetin-like protein 1 (677 aa).

Positions 203 to 216 (TSSAPSGESTTATF) are enriched in polar residues. 3 disordered regions span residues 203 to 232 (TSSAPSGESTTATFHRTPLFGNTKKEPQSF), 249 to 324 (VPSG…SFNG), and 337 to 378 (GIFG…TDDR). K226 is covalently cross-linked (Glycyl lysine isopeptide (Lys-Gly) (interchain with G-Cter in SUMO2)). Positions 264–280 (DSDTINMLSNPTLNKAP) are enriched in polar residues. The span at 281 to 292 (SKTEDSGQREDN) shows a compositional bias: basic and acidic residues. K341 is subject to N6-acetyllysine. Residues 347 to 358 (SNKQDGSEQNGN) are compositionally biased toward polar residues. Residues A407 and 447 to 452 (GTGKTL) contribute to the ATP site.

The protein belongs to the AAA ATPase family. As to quaternary structure, hexamer. Interacts (via N-terminal one-half region) with RAD51; the interaction is direct. Interacts (via N-terminal one-half region) with SPIDR (via the C-terminal region); the interaction is direct. Interacts with FIRRM; may regulate homologous recombination. Mg(2+) is required as a cofactor.

It localises to the nucleus. It is found in the cytoplasm. Its subcellular location is the perinuclear region. The catalysed reaction is ATP + H2O = ADP + phosphate + H(+). Its function is as follows. Involved in DNA double-strand break (DBS) repair via homologous recombination (HR). Recruited at DSB sites independently of BRCA2, RAD51 and RAD51 paralogs in a H2AX-dependent manner. May regulate osteoblast proliferation and differentiation. May play a role in the control of male meiosis dynamic. This is Fidgetin-like protein 1 (Fignl1) from Rattus norvegicus (Rat).